The primary structure comprises 430 residues: KICSTOR complex protein kaptin (430 aa).

Positions 410-430 (RKHQQGLGDRVGPRPVEHPAS) are disordered. Over residues 420 to 430 (VGPRPVEHPAS) the composition is skewed to basic and acidic residues.

Part of the KICSTOR complex composed of KPTN, ITFG2, KICS2 and SZT2. SZT2 probably serves as a link between the other three proteins in the KICSTOR complex and mediates the direct interaction with the GATOR1 complex. May associate with F-actin filaments.

It localises to the lysosome membrane. The protein resides in the cell projection. It is found in the lamellipodium. Its subcellular location is the stereocilium. Functionally, as part of the KICSTOR complex functions in the amino acid-sensing branch of the TORC1 signaling pathway. Recruits, in an amino acid-independent manner, the GATOR1 complex to the lysosomal membranes and allows its interaction with GATOR2 and the RAG GTPases. Functions upstream of the RAG GTPases and is required to negatively regulate mTORC1 signaling in absence of amino acids. In absence of the KICSTOR complex mTORC1 is constitutively localized to the lysosome and activated. The KICSTOR complex is also probably involved in the regulation of mTORC1 by glucose. This is KICSTOR complex protein kaptin from Mus musculus (Mouse).